We begin with the raw amino-acid sequence, 672 residues long: Poly-beta-1,6-N-acetyl-D-glucosamine N-deacetylase (672 aa).

The first 20 residues, 1 to 20 (MLRNGNKYLLMLVSIIMLTA), serve as a signal peptide directing secretion. Cysteine 21 carries the N-palmitoyl cysteine lipid modification. Cysteine 21 is lipidated: S-diacylglycerol cysteine. In terms of domain architecture, NodB homology spans 107 to 349 (KAVVLTFDDG…IQRVKDMQIS (243 aa)).

It belongs to the polysaccharide deacetylase family.

It is found in the cell outer membrane. In terms of biological role, catalyzes the N-deacetylation of poly-beta-1,6-N-acetyl-D-glucosamine (PGA), a biofilm adhesin polysaccharide. N-deacetylation promotes PGA export through the PgaA porin. In Escherichia coli (strain K12), this protein is Poly-beta-1,6-N-acetyl-D-glucosamine N-deacetylase (pgaB).